A 229-amino-acid chain; its full sequence is MDQDDPAEALTELREKRLGLLEIVQAAAGSGLAVYTIWALLLQPGFRRVPLRLQVPYVGASARQVENVLSLLRGRPGKMVDLGSGDGRIVLAAHQCGLRPAMGYELNPWLVGLARLHAWRAGCSASVCYHRKDLWKVSLRDCHNVSVFLAPSVLQLLEDKLQAELPVGARVVSGRFPLPTWQPVAVVGEGTDRVWAYDVHGSGPTVSSCGVPIKAIPESSSTLVPRAPV.

The N-terminal sequence (NTS) stretch occupies residues Met1 to Glu22. Residues Leu20–Leu42 form a helical membrane-spanning segment. The segment at Gln43–Gly77 is methyltransferase (MTase). The segment at Gln43–Gly77 is pre-methyltransferase (preMT).

Belongs to the ANT/ATPSC lysine N-methyltransferase family.

It localises to the mitochondrion membrane. It catalyses the reaction L-lysyl-[protein] + 3 S-adenosyl-L-methionine = N(6),N(6),N(6)-trimethyl-L-lysyl-[protein] + 3 S-adenosyl-L-homocysteine + 3 H(+). Functionally, mitochondrial protein-lysine N-methyltransferase that trimethylates adenine nucleotide translocases ANT2/SLC25A5 and ANT3/SLC25A6, thereby regulating mitochondrial respiration. Probably also trimethylates ANT1/SLC25A4. This is Adenine nucleotide translocase lysine N-methyltransferase from Mus musculus (Mouse).